The chain runs to 476 residues: Deoxyguanosinetriphosphate triphosphohydrolase-like protein 2 (476 aa).

Residues methionine 1–lysine 20 form a disordered region. Residues arginine 60–serine 233 form the HD domain.

It belongs to the dGTPase family. Type 2 subfamily.

The protein is Deoxyguanosinetriphosphate triphosphohydrolase-like protein 2 of Mesorhizobium japonicum (strain LMG 29417 / CECT 9101 / MAFF 303099) (Mesorhizobium loti (strain MAFF 303099)).